Reading from the N-terminus, the 345-residue chain is S-adenosylmethionine:tRNA ribosyltransferase-isomerase (345 aa).

This sequence belongs to the QueA family. In terms of assembly, monomer.

The protein localises to the cytoplasm. It catalyses the reaction 7-aminomethyl-7-carbaguanosine(34) in tRNA + S-adenosyl-L-methionine = epoxyqueuosine(34) in tRNA + adenine + L-methionine + 2 H(+). It functions in the pathway tRNA modification; tRNA-queuosine biosynthesis. Functionally, transfers and isomerizes the ribose moiety from AdoMet to the 7-aminomethyl group of 7-deazaguanine (preQ1-tRNA) to give epoxyqueuosine (oQ-tRNA). In Helicobacter pylori (strain Shi470), this protein is S-adenosylmethionine:tRNA ribosyltransferase-isomerase.